The sequence spans 286 residues: Deaminated glutathione amidase (286 aa).

Positions A4–T252 constitute a CN hydrolase domain. E42 functions as the Proton acceptor in the catalytic mechanism. K115 is a catalytic residue. C157 acts as the Nucleophile in catalysis.

The protein belongs to the carbon-nitrogen hydrolase superfamily. NIT1/NIT2 family.

The catalysed reaction is N-(4-oxoglutaryl)-L-cysteinylglycine + H2O = L-cysteinylglycine + 2-oxoglutarate. Hydrolyzes deaminated glutathione (dGSH, 2-oxoglutaramate) to alpha-ketoglutarate (alpha-KG) and cysteinylglycine (specific activity 6.50 umol/min/mg), has less activity against alpha-ketoglutaramate (a-KGM, specific activity 0.20 umol/min/mg), very little activity on glutathione and none on L-glutamine. May function as a metabolite repair enzyme. The protein is Deaminated glutathione amidase of Yersinia enterocolitica.